Reading from the N-terminus, the 406-residue chain is Tryptophan synthase beta chain (406 aa).

K99 carries the N6-(pyridoxal phosphate)lysine modification.

It belongs to the TrpB family. Tetramer of two alpha and two beta chains. Requires pyridoxal 5'-phosphate as cofactor.

It carries out the reaction (1S,2R)-1-C-(indol-3-yl)glycerol 3-phosphate + L-serine = D-glyceraldehyde 3-phosphate + L-tryptophan + H2O. It functions in the pathway amino-acid biosynthesis; L-tryptophan biosynthesis; L-tryptophan from chorismate: step 5/5. In terms of biological role, the beta subunit is responsible for the synthesis of L-tryptophan from indole and L-serine. The chain is Tryptophan synthase beta chain from Rhizobium etli (strain CIAT 652).